The sequence spans 404 residues: Probable tRNA sulfurtransferase (404 aa).

Positions 60-165 constitute a THUMP domain; it reads QPVAESLKQI…EEAAYISYET (106 aa). Residues 183 to 184, 208 to 209, arginine 265, glycine 287, and glutamine 296 each bind ATP; these read ML and HF.

Belongs to the ThiI family.

Its subcellular location is the cytoplasm. It catalyses the reaction [ThiI sulfur-carrier protein]-S-sulfanyl-L-cysteine + a uridine in tRNA + 2 reduced [2Fe-2S]-[ferredoxin] + ATP + H(+) = [ThiI sulfur-carrier protein]-L-cysteine + a 4-thiouridine in tRNA + 2 oxidized [2Fe-2S]-[ferredoxin] + AMP + diphosphate. The catalysed reaction is [ThiS sulfur-carrier protein]-C-terminal Gly-Gly-AMP + S-sulfanyl-L-cysteinyl-[cysteine desulfurase] + AH2 = [ThiS sulfur-carrier protein]-C-terminal-Gly-aminoethanethioate + L-cysteinyl-[cysteine desulfurase] + A + AMP + 2 H(+). It functions in the pathway cofactor biosynthesis; thiamine diphosphate biosynthesis. In terms of biological role, catalyzes the ATP-dependent transfer of a sulfur to tRNA to produce 4-thiouridine in position 8 of tRNAs, which functions as a near-UV photosensor. Also catalyzes the transfer of sulfur to the sulfur carrier protein ThiS, forming ThiS-thiocarboxylate. This is a step in the synthesis of thiazole, in the thiamine biosynthesis pathway. The sulfur is donated as persulfide by IscS. The protein is Probable tRNA sulfurtransferase of Streptococcus sanguinis (strain SK36).